Consider the following 250-residue polypeptide: Glycerol uptake facilitator protein-like 5 (250 aa).

2 helical membrane-spanning segments follow: residues 12 to 32 (EFFG…NAFL) and 46 to 66 (GGWL…AMMF). The NPA 1 motif lies at 75–77 (NPA). The next 3 helical transmembrane spans lie at 85 to 105 (IGIF…LGAI), 142 to 162 (LNGF…AMGL), and 172 to 192 (IDIA…SLGG). Positions 199 to 201 (NPA) match the NPA 2 motif. Residues 230 to 250 (VVAPIVGAVIGIWIYKIFFGL) traverse the membrane as a helical segment.

Belongs to the MIP/aquaporin (TC 1.A.8) family.

It is found in the cell membrane. Its function is as follows. Probable transporter that facilitates the transmembrane diffusion of an unknown substrate. Is not permeable to water, dihydroxyacetone, glycerol, urea, H(2)O(2) and D/L-lactic acid. This chain is Glycerol uptake facilitator protein-like 5, found in Lactiplantibacillus plantarum (strain ATCC BAA-793 / NCIMB 8826 / WCFS1) (Lactobacillus plantarum).